Here is a 122-residue protein sequence, read N- to C-terminus: MIQPQTLLNVADNSGARELMCIRIIGASNRRYAHIGDVIVAVIKEAVPNMPLARSEVVRAVIVRTCKELKRDNGMIIRYDDNAAVVIDQEGNPKGTRIFGAIARELRQLNFTKIVSLAPEVL.

It belongs to the universal ribosomal protein uL14 family. As to quaternary structure, part of the 50S ribosomal subunit.

It is found in the plastid. It localises to the chloroplast. In terms of biological role, binds to 23S rRNA. This is Large ribosomal subunit protein uL14c from Daucus carota (Wild carrot).